Here is a 424-residue protein sequence, read N- to C-terminus: Folate-like transporter 2 (424 aa).

N-linked (GlcNAc...) asparagine glycosylation is present at asparagine 35. 6 helical membrane-spanning segments follow: residues 48–68, 71–91, 99–119, 136–156, 164–184, and 233–253; these read IWTY…DVFL, PLLV…VFGK, LEVF…YIYV, ALLV…GLNW, IISL…PGVE, and PLIL…YQVT. The N-linked (GlcNAc...) asparagine glycan is linked to asparagine 254. Transmembrane regions (helical) follow at residues 299-319, 324-344, 361-381, and 392-412; these read WGDL…FWMS, IVVL…TTTI, LFGI…AVVI, and FVVY…IFGI.

Belongs to the reduced folate carrier (RFC) transporter (TC 2.A.48) family.

It is found in the membrane. Its function is as follows. Unlike folt-1, does not appear to act as a folate transporter. The polypeptide is Folate-like transporter 2 (folt-2) (Caenorhabditis elegans).